The primary structure comprises 193 residues: Bradykinin-potentiating and C-type natriuretic peptides (193 aa).

The N-terminal stretch at 1–23 is a signal peptide; it reads MFVSRLAASGLLLLALLALSLDG. The propeptide occupies 24–27; it reads KPVH. The interval 25–173 is disordered; it reads PVHQSKPGRS…RMKGLAKKAM (149 aa). Residue Gln28 is modified to Pyrrolidone carboxylic acid. Propeptides lie at residues 40 to 43 and 58 to 64; these read LSAQ and LSVQQWS. Gln65 is modified (pyrrolidone carboxylic acid). A propeptide spanning residues 75 to 169 is cleaved from the precursor; sequence VVVQPHESPA…GGARRMKGLA (95 aa). A compositionally biased stretch (low complexity) spans 95–123; it reads SPGPEAASGPAAPHRLPKSKGASATSAAS. Residues 125-150 show a composition bias toward basic and acidic residues; sequence PMRDLRTDGKQERQKWGRMVQPDHHA. Residues 152 to 162 show a composition bias toward gly residues; it reads PGGGGGGGGGA. Basic residues predominate over residues 163 to 173; it reads RRMKGLAKKAM. Cys177 and Cys193 form a disulfide bridge.

This sequence in the N-terminal section; belongs to the bradykinin-potentiating peptide family. It in the C-terminal section; belongs to the natriuretic peptide family. As to expression, expressed by the venom gland.

Its subcellular location is the secreted. Functionally, bradykinin-potentiating peptide both inhibits the activity of the angiotensin-converting enzyme (ACE) and enhances the action of bradykinin by inhibiting the peptidases that inactivate it. It acts as an indirect hypotensive agent. Neither synthetic Tf1, nor synthetic Tf2 show bradykinin-potentiating effects. Has a vasorelaxant activity in rat aortic strips and a diuretic potency in anesthetized rats. Its function is as follows. Has a vasorelaxant activity in rat aortic strips and a diuretic potency in anesthetized rats. Is as potent as Tf-CNP. The protein is Bradykinin-potentiating and C-type natriuretic peptides of Protobothrops flavoviridis (Habu).